The following is a 100-amino-acid chain: Aspartyl/glutamyl-tRNA(Asn/Gln) amidotransferase subunit C (100 aa).

The protein belongs to the GatC family. Heterotrimer of A, B and C subunits.

It carries out the reaction L-glutamyl-tRNA(Gln) + L-glutamine + ATP + H2O = L-glutaminyl-tRNA(Gln) + L-glutamate + ADP + phosphate + H(+). The catalysed reaction is L-aspartyl-tRNA(Asn) + L-glutamine + ATP + H2O = L-asparaginyl-tRNA(Asn) + L-glutamate + ADP + phosphate + 2 H(+). Its function is as follows. Allows the formation of correctly charged Asn-tRNA(Asn) or Gln-tRNA(Gln) through the transamidation of misacylated Asp-tRNA(Asn) or Glu-tRNA(Gln) in organisms which lack either or both of asparaginyl-tRNA or glutaminyl-tRNA synthetases. The reaction takes place in the presence of glutamine and ATP through an activated phospho-Asp-tRNA(Asn) or phospho-Glu-tRNA(Gln). This is Aspartyl/glutamyl-tRNA(Asn/Gln) amidotransferase subunit C from Dictyoglomus turgidum (strain DSM 6724 / Z-1310).